The following is a 371-amino-acid chain: DNA replication and repair protein RecF (371 aa).

30–37 contacts ATP; the sequence is GQNGMGKT.

It belongs to the RecF family.

Its subcellular location is the cytoplasm. Its function is as follows. The RecF protein is involved in DNA metabolism; it is required for DNA replication and normal SOS inducibility. RecF binds preferentially to single-stranded, linear DNA. It also seems to bind ATP. The sequence is that of DNA replication and repair protein RecF from Phocaeicola vulgatus (strain ATCC 8482 / DSM 1447 / JCM 5826 / CCUG 4940 / NBRC 14291 / NCTC 11154) (Bacteroides vulgatus).